Consider the following 267-residue polypeptide: 3-deoxy-manno-octulosonate cytidylyltransferase (267 aa).

The protein belongs to the KdsB family.

It localises to the cytoplasm. The catalysed reaction is 3-deoxy-alpha-D-manno-oct-2-ulosonate + CTP = CMP-3-deoxy-beta-D-manno-octulosonate + diphosphate. It functions in the pathway nucleotide-sugar biosynthesis; CMP-3-deoxy-D-manno-octulosonate biosynthesis; CMP-3-deoxy-D-manno-octulosonate from 3-deoxy-D-manno-octulosonate and CTP: step 1/1. The protein operates within bacterial outer membrane biogenesis; lipopolysaccharide biosynthesis. Functionally, activates KDO (a required 8-carbon sugar) for incorporation into bacterial lipopolysaccharide in Gram-negative bacteria. The chain is 3-deoxy-manno-octulosonate cytidylyltransferase from Paraburkholderia phymatum (strain DSM 17167 / CIP 108236 / LMG 21445 / STM815) (Burkholderia phymatum).